Here is an 868-residue protein sequence, read N- to C-terminus: Protein translocase subunit SecA (868 aa).

Residues Gln87, 105 to 109 (GEGKT), and Asp500 contribute to the ATP site. Residues Cys849, Cys851, Cys860, and His861 each contribute to the Zn(2+) site.

This sequence belongs to the SecA family. Monomer and homodimer. Part of the essential Sec protein translocation apparatus which comprises SecA, SecYEG and auxiliary proteins SecDF-YajC and YidC. Zn(2+) serves as cofactor.

It localises to the cell membrane. The protein localises to the cytoplasm. It catalyses the reaction ATP + H2O + cellular proteinSide 1 = ADP + phosphate + cellular proteinSide 2.. Part of the Sec protein translocase complex. Interacts with the SecYEG preprotein conducting channel. Has a central role in coupling the hydrolysis of ATP to the transfer of proteins into and across the cell membrane, serving both as a receptor for the preprotein-SecB complex and as an ATP-driven molecular motor driving the stepwise translocation of polypeptide chains across the membrane. This is Protein translocase subunit SecA from Wolbachia pipientis wMel.